A 62-amino-acid polypeptide reads, in one-letter code: UPF0434 protein RHE_CH03977 (62 aa).

This sequence belongs to the UPF0434 family.

This Rhizobium etli (strain ATCC 51251 / DSM 11541 / JCM 21823 / NBRC 15573 / CFN 42) protein is UPF0434 protein RHE_CH03977.